Consider the following 408-residue polypeptide: AA9 family lytic polysaccharide monooxygenase A (408 aa).

The N-terminal stretch at 1-20 (MKTTTYSLLALAAASKLASA) is a signal peptide. The Cu(2+) site is built by H21 and H103. C63 and C186 are disulfide-bonded. A glycan (N-linked (GlcNAc...) asparagine) is linked at N151. H172 lines the O2 pocket. Cu(2+) is bound at residue Y183. N-linked (GlcNAc...) asparagine glycosylation is found at N331 and N381. The 37-residue stretch at 369 to 405 (GVAKQYERCGGINHTGPTTCESGSVCKKWNPYYYQCV) folds into the CBM1 domain.

This sequence belongs to the polysaccharide monooxygenase AA9 family. Cu(2+) is required as a cofactor.

The protein resides in the secreted. It carries out the reaction [(1-&gt;4)-beta-D-glucosyl]n+m + reduced acceptor + O2 = 4-dehydro-beta-D-glucosyl-[(1-&gt;4)-beta-D-glucosyl]n-1 + [(1-&gt;4)-beta-D-glucosyl]m + acceptor + H2O.. Functionally, lytic polysaccharide monooxygenase (LPMO) that depolymerizes crystalline and amorphous polysaccharides via the oxidation of scissile alpha- or beta-(1-4)-glycosidic bonds, yielding C4 oxidation products. Catalysis by LPMOs requires the reduction of the active-site copper from Cu(II) to Cu(I) by a reducing agent and H(2)O(2) or O(2) as a cosubstrate. This Aspergillus kawachii (strain NBRC 4308) (White koji mold) protein is AA9 family lytic polysaccharide monooxygenase A (eglD).